The following is a 124-amino-acid chain: Alpha-amylase inhibitor 0.53 (124 aa).

4 disulfides stabilise this stretch: C20/C41, C28/C83, C42/C99, and C54/C115.

The protein belongs to the protease inhibitor I6 (cereal trypsin/alpha-amylase inhibitor) family. Homodimer. Post-translationally, the disulfide bonds are essential for the inhibitor activity. As to expression, endosperm.

It localises to the secreted. In terms of biological role, alpha-amylase inhibitor. The protein is Alpha-amylase inhibitor 0.53 of Triticum aestivum (Wheat).